Reading from the N-terminus, the 448-residue chain is Histidine--tRNA ligase (448 aa).

Disordered regions lie at residues 1-20 (MAIK…SPKL) and 428-448 (AGQA…QEKA).

The protein belongs to the class-II aminoacyl-tRNA synthetase family. Homodimer.

It is found in the cytoplasm. The enzyme catalyses tRNA(His) + L-histidine + ATP = L-histidyl-tRNA(His) + AMP + diphosphate + H(+). This Deinococcus deserti (strain DSM 17065 / CIP 109153 / LMG 22923 / VCD115) protein is Histidine--tRNA ligase.